We begin with the raw amino-acid sequence, 216 residues long: Uracil phosphoribosyltransferase (216 aa).

GTP is bound at residue 30 to 34 (KNLVR). 5-phospho-alpha-D-ribose 1-diphosphate is bound by residues R80, R105, and 140–148 (DPMIATAST). Residues I203 and 208–210 (GDA) contribute to the uracil site. D209 is a binding site for 5-phospho-alpha-D-ribose 1-diphosphate.

Belongs to the UPRTase family. Mg(2+) serves as cofactor.

The enzyme catalyses UMP + diphosphate = 5-phospho-alpha-D-ribose 1-diphosphate + uracil. It functions in the pathway pyrimidine metabolism; UMP biosynthesis via salvage pathway; UMP from uracil: step 1/1. Its activity is regulated as follows. Allosterically activated by GTP. Catalyzes the conversion of uracil and 5-phospho-alpha-D-ribose 1-diphosphate (PRPP) to UMP and diphosphate. The chain is Uracil phosphoribosyltransferase from Saccharolobus islandicus (strain M.16.4 / Kamchatka #3) (Sulfolobus islandicus).